Reading from the N-terminus, the 704-residue chain is ATP-dependent zinc metalloprotease FTSH 5, chloroplastic (704 aa).

A chloroplast-targeting transit peptide spans 1 to 58 (MATTSSNPLLLSSNFLGSQIIISAPTPKTTTKSLPFSVISRKRYQISQSEKLMKSLPS). A thylakoid-targeting transit peptide spans 59-76 (QAALAALLFSSSSPQALA). Residues 193–213 (FDFIGNLLFPLLAFGGLFYLF) traverse the membrane as a helical segment. 290 to 297 (GPPGTGKT) contacts ATP. Zn(2+) is bound at residue His512. Glu513 is a catalytic residue. Positions 516 and 593 each coordinate Zn(2+).

In the N-terminal section; belongs to the AAA ATPase family. The protein in the C-terminal section; belongs to the peptidase M41 family. Heterohexamers with FTSH1, FTSH2 and FTSH8. Zn(2+) serves as cofactor. Ubiquitous.

The protein localises to the plastid. It localises to the chloroplast thylakoid membrane. Functionally, part of a complex that function as an ATP-dependent zinc metallopeptidase. Involved in the thylakoid formation and in the removal of damaged D1 in the photosystem II, preventing cell death under high-intensity light conditions. Not involved in the degradation of the light-harvesting complex of photosystem II (LHC II) or in thermotolerance. This is ATP-dependent zinc metalloprotease FTSH 5, chloroplastic (FTSH5) from Arabidopsis thaliana (Mouse-ear cress).